Consider the following 1250-residue polypeptide: Minor capsid protein M1249L (1250 aa).

This sequence belongs to the asfivirus M1249L family. As to quaternary structure, interacts with the minor capsid protein p17 and with the hexon capsid protein p72 capsomers; these interactions form a rigid zipper structure that stabilizes the capsomers. Interacts with host IRF3.

The protein localises to the virion. The protein resides in the host cytoplasm. Functionally, together with the penton and the other minor capsid proteins (p17, p49), forms a complicated network immediately below the outer capsid shell, stabilizing the whole capsid. In addition, blocks IFN-beta transactivation mediated by the cGAS-STING pathway and regulates the transcriptional activity of IFN-beta. Mechanistically, suppresses the phosphorylation of host key adapter protein TBK1 and degrades host IRF3 in the cytoplasm. The polypeptide is Minor capsid protein M1249L (Ornithodoros (relapsing fever ticks)).